Here is a 286-residue protein sequence, read N- to C-terminus: Homoserine kinase (286 aa).

78–88 provides a ligand contact to ATP; it reads PLARGLGSSSS.

This sequence belongs to the GHMP kinase family. Homoserine kinase subfamily.

It localises to the cytoplasm. It carries out the reaction L-homoserine + ATP = O-phospho-L-homoserine + ADP + H(+). It functions in the pathway amino-acid biosynthesis; L-threonine biosynthesis; L-threonine from L-aspartate: step 4/5. Its function is as follows. Catalyzes the ATP-dependent phosphorylation of L-homoserine to L-homoserine phosphate. The chain is Homoserine kinase from Streptococcus equi subsp. zooepidemicus (strain H70).